The primary structure comprises 332 residues: Putative D-threonate 4-phosphate dehydrogenase (332 aa).

Substrate-binding residues include His138 and Thr139. Residues His168, His211, and His266 each contribute to the a divalent metal cation site. Substrate is bound by residues Lys274 and Arg292.

This sequence belongs to the PdxA family. PdxA2 subfamily. Homodimer. A divalent metal cation serves as cofactor.

It carries out the reaction 4-O-phospho-D-threonate + NAD(+) = dihydroxyacetone phosphate + CO2 + NADH. Its function is as follows. Catalyzes the NAD-dependent oxidation and subsequent decarboxylation of D-threonate 4-phosphate to produce dihydroxyacetone phosphate (DHAP). This Fusobacterium nucleatum subsp. nucleatum (strain ATCC 25586 / DSM 15643 / BCRC 10681 / CIP 101130 / JCM 8532 / KCTC 2640 / LMG 13131 / VPI 4355) protein is Putative D-threonate 4-phosphate dehydrogenase.